A 1336-amino-acid polypeptide reads, in one-letter code: SH3 domain and tetratricopeptide repeat-containing protein 1 (1336 aa).

Residue M1 is modified to N-acetylmethionine. Disordered regions lie at residues 1 to 76 (MENL…PPCQ) and 225 to 266 (TGPR…SEEV). Gly residues predominate over residues 18–27 (GPVGPSGGGS). Positions 46-61 (AGPEEAKAPVRGDEAP) are enriched in basic and acidic residues. Low complexity-rich tracts occupy residues 62–74 (PARVAGPAAGTPP) and 247–266 (EAAPETDSSPPSPSVSSEEV). In terms of domain architecture, SH3 spans 305 to 368 (MAVGLASALA…RSSLISMQGP (64 aa)). 8 TPR repeats span residues 560–593 (ARLCFLLGRLCSRRLKLSQARVYFEEALGALEGS), 601–634 (VAVYANLASIYRKQKNREKCAQVVPKAMALLLGT), 665–698 (ARACFLLARHHVHLKQPEEALPFLERLLLLHRDS), 786–819 (GPLYTSLAQLYSHHGCHGPAITFMTQAVEASAIA), 863–896 (GVIANMVAVALKRTGRTRQAAESYYRALRVARDL), 946–979 (THVLLQLGHLCTRQGPAQQGKGYYEWALLVAVEM), 1027–1063 (GQLLETISQLYLSLGTERAYKSALDYTKRSLGIFIDL), and 1192–1225 (RVAYHRLAALQHRLGHGELAEHFYLKALSLCNSP). The residue at position 1248 (Y1248) is a Phosphotyrosine. The stretch at 1277–1311 (LKIYTRLATIYHNFLLDREKSLFFYQKARTFATEL) is one TPR 9 repeat.

This chain is SH3 domain and tetratricopeptide repeat-containing protein 1 (SH3TC1), found in Homo sapiens (Human).